A 30-amino-acid polypeptide reads, in one-letter code: Hainantoxin F7-28.42 (30 aa).

Expressed by the venom gland.

It is found in the secreted. The polypeptide is Hainantoxin F7-28.42 (Cyriopagopus hainanus (Chinese bird spider)).